Reading from the N-terminus, the 265-residue chain is Hydroxyethylthiazole kinase (265 aa).

Position 50 (Met50) interacts with substrate. The ATP site is built by Arg125 and Thr171. Substrate is bound at residue Gly198.

Belongs to the Thz kinase family. Requires Mg(2+) as cofactor.

The catalysed reaction is 5-(2-hydroxyethyl)-4-methylthiazole + ATP = 4-methyl-5-(2-phosphooxyethyl)-thiazole + ADP + H(+). It participates in cofactor biosynthesis; thiamine diphosphate biosynthesis; 4-methyl-5-(2-phosphoethyl)-thiazole from 5-(2-hydroxyethyl)-4-methylthiazole: step 1/1. Its function is as follows. Catalyzes the phosphorylation of the hydroxyl group of 4-methyl-5-beta-hydroxyethylthiazole (THZ). The protein is Hydroxyethylthiazole kinase of Salmonella arizonae (strain ATCC BAA-731 / CDC346-86 / RSK2980).